The following is a 524-amino-acid chain: Phosphoenolpyruvate carboxykinase (ATP) (524 aa).

Residues Arg-52, Tyr-188, and Lys-194 each coordinate substrate. ATP-binding positions include Lys-194, His-213, and Gly-229–Thr-237. Lys-194 and His-213 together coordinate Mn(2+). Asp-250 is a binding site for Mn(2+). ATP-binding residues include Glu-278, Arg-314, and Thr-439. Residue Arg-314 participates in substrate binding.

This sequence belongs to the phosphoenolpyruvate carboxykinase (ATP) family. Mn(2+) serves as cofactor.

The protein localises to the cytoplasm. It catalyses the reaction oxaloacetate + ATP = phosphoenolpyruvate + ADP + CO2. It functions in the pathway carbohydrate biosynthesis; gluconeogenesis. In terms of biological role, involved in the gluconeogenesis. Catalyzes the conversion of oxaloacetate (OAA) to phosphoenolpyruvate (PEP) through direct phosphoryl transfer between the nucleoside triphosphate and OAA. The sequence is that of Phosphoenolpyruvate carboxykinase (ATP) from Campylobacter lari (strain RM2100 / D67 / ATCC BAA-1060).